A 540-amino-acid chain; its full sequence is Membrane protein insertase YidC (540 aa).

A helical membrane pass occupies residues 6-26; sequence NILLIALALVSFLLFQQWQVA. Positions 36–63 are disordered; the sequence is QAQSSSTLPAPSFADELDPVPGQQQASA. 4 helical membrane-spanning segments follow: residues 342–362, 417–437, 455–475, and 496–516; these read AFIQSFVGNWGVAIICLTFIV, LGGCLPLILQMPIFIALYWAL, LSAQDPYYILPLLMGASMFLI, and PVMFTFFFLFFPSGLVLYWLV.

Belongs to the OXA1/ALB3/YidC family. Type 1 subfamily. Interacts with the Sec translocase complex via SecD. Specifically interacts with transmembrane segments of nascent integral membrane proteins during membrane integration.

Its subcellular location is the cell inner membrane. In terms of biological role, required for the insertion and/or proper folding and/or complex formation of integral membrane proteins into the membrane. Involved in integration of membrane proteins that insert both dependently and independently of the Sec translocase complex, as well as at least some lipoproteins. Aids folding of multispanning membrane proteins. This is Membrane protein insertase YidC from Vibrio campbellii (strain ATCC BAA-1116).